We begin with the raw amino-acid sequence, 341 residues long: MDYRSAGVDVAAGRAFVEQIRPLVQRTQRPEVVGGLGGFAGLCQIPKGYRQPLLVSGTDGVGTKLKLAQALDRHNTVGIDLVAMCVNDVLTCGAEPLFFLDYIACGRLAPEMMNAVVAGIAQGCEAAGCALLGGETAEMPGFYAEGVYDLAGFCVGVVEQDQVLDGTQVQVGDVVLGLASSGLHSNGFSLVRKIVSDRQLSWQDTPLGPTSLGELCLEPTRIYVQPIRAALSQGIPIHGMAHITGGGLPENLPRCLGQGRSAHLDPQAWPIPPLFHWLGEVGNVSLGELFNTFNMGIGYTVVLPASAVAAAQTCFAKWGIESWPIGTVVAGAGEVLGLPAA.

The protein belongs to the AIR synthase family.

The protein localises to the cytoplasm. The enzyme catalyses 2-formamido-N(1)-(5-O-phospho-beta-D-ribosyl)acetamidine + ATP = 5-amino-1-(5-phospho-beta-D-ribosyl)imidazole + ADP + phosphate + H(+). Its pathway is purine metabolism; IMP biosynthesis via de novo pathway; 5-amino-1-(5-phospho-D-ribosyl)imidazole from N(2)-formyl-N(1)-(5-phospho-D-ribosyl)glycinamide: step 2/2. The protein is Phosphoribosylformylglycinamidine cyclo-ligase of Thermosynechococcus vestitus (strain NIES-2133 / IAM M-273 / BP-1).